A 526-amino-acid chain; its full sequence is MPQQLLITLPTEASTWVKLQHPKKAVEGAPLWEDVTKMFEGEALLSQDAEDVKTQRESLEDEVTPGLPTAESQELLTFKDISIDFTQEEWGQLAPAHQNLYREVMLENYSNLVSVGYQLSKPSVISQLEKGEEPWMAEKEGPGDPSSDLKSKIETIESTAKSTISQERLYHGIMMESFMRDDIIYSTLRKVSTYDDVLERHQETCMRDVRQAILTHKKRVQETNKFGENIIVHSNVIIEQRHHKYDTPTKRNTYKLDLINHPTSYIRTKTYECNICEKIFKQPIHLTEHMRIHTGEKPFRCKECGRAFSQSASLSTHQRIHTGEKPFECEECGKAFRHRSSLNQHHRTHTGEKPYVCDKCQKAFSQNISLVQHLRTHSGEKPFTCNECGKTFRQIRHLSEHIRIHTGEKPYACTACCKTFSHRAYLTHHQRIHTGERPYKCKECGKAFRQRIHLSNHKTVHTGVKAYECNRCGKAYRHDSSFKKHQRHHTGEKPYECNECGKAFSYNSSLSRHHEIHRRNAFRNKV.

In terms of domain architecture, SCAN box spans 1 to 39; it reads MPQQLLITLPTEASTWVKLQHPKKAVEGAPLWEDVTKMF. One can recognise a KRAB domain in the interval 76–147; the sequence is LTFKDISIDF…EKEGPGDPSS (72 aa). 9 C2H2-type zinc fingers span residues 271–293, 299–321, 327–349, 355–377, 383–405, 411–433, 439–461, 467–489, and 495–517; these read YECN…MRIH, FRCK…QRIH, FECE…HRTH, YVCD…LRTH, FTCN…IRIH, YACT…QRIH, YKCK…KTVH, YECN…QRHH, and YECN…HEIH.

The protein belongs to the krueppel C2H2-type zinc-finger protein family. In terms of tissue distribution, expressed in visceral and subcutaneous adipose tissue.

The protein resides in the nucleus. Functionally, putative transcription factor that appears to regulate lipid metabolism. The sequence is that of Zinc finger protein 69 homolog (ZFP69) from Homo sapiens (Human).